The following is a 390-amino-acid chain: Alanine racemase (390 aa).

Lys37 (proton acceptor; specific for D-alanine) is an active-site residue. The residue at position 37 (Lys37) is an N6-(pyridoxal phosphate)lysine. Arg135 is a binding site for substrate. The active-site Proton acceptor; specific for L-alanine is Tyr274. Met322 is a binding site for substrate.

Belongs to the alanine racemase family. It depends on pyridoxal 5'-phosphate as a cofactor.

It catalyses the reaction L-alanine = D-alanine. It functions in the pathway amino-acid biosynthesis; D-alanine biosynthesis; D-alanine from L-alanine: step 1/1. Catalyzes the interconversion of L-alanine and D-alanine. May also act on other amino acids. This is Alanine racemase (alr) from Desulfosudis oleivorans (strain DSM 6200 / JCM 39069 / Hxd3) (Desulfococcus oleovorans).